Consider the following 473-residue polypeptide: Glutamyl-tRNA reductase (473 aa).

Residues 49 to 52 (TCNR), Ser-109, 114 to 116 (EQQ), and Gln-120 each bind substrate. Cys-50 functions as the Nucleophile in the catalytic mechanism. An NADP(+)-binding site is contributed by 189–194 (GAGSMG). The disordered stretch occupies residues 445–473 (SGLDAGSGPQGADGPSAGPTPSAPNPSAE).

The protein belongs to the glutamyl-tRNA reductase family. In terms of assembly, homodimer.

It carries out the reaction (S)-4-amino-5-oxopentanoate + tRNA(Glu) + NADP(+) = L-glutamyl-tRNA(Glu) + NADPH + H(+). The protein operates within porphyrin-containing compound metabolism; protoporphyrin-IX biosynthesis; 5-aminolevulinate from L-glutamyl-tRNA(Glu): step 1/2. Its function is as follows. Catalyzes the NADPH-dependent reduction of glutamyl-tRNA(Glu) to glutamate 1-semialdehyde (GSA). The chain is Glutamyl-tRNA reductase from Mycobacterium ulcerans (strain Agy99).